The primary structure comprises 225 residues: 7-carboxy-7-deazaguanine synthase (225 aa).

Residues 14–16 and R29 contribute to the substrate site; that span reads LQG. The Radical SAM core domain occupies 20–225; the sequence is HFGKSAFFIR…LQTHKWLGVL (206 aa). [4Fe-4S] cluster-binding residues include C33, C37, and C40. T42 is a binding site for Mg(2+). T77 is a substrate binding site. Residues G79 and 127-129 contribute to the S-adenosyl-L-methionine site; that span reads SPK.

This sequence belongs to the radical SAM superfamily. 7-carboxy-7-deazaguanine synthase family. Homodimer. The cofactor is [4Fe-4S] cluster. S-adenosyl-L-methionine serves as cofactor. Mg(2+) is required as a cofactor.

The enzyme catalyses 6-carboxy-5,6,7,8-tetrahydropterin + H(+) = 7-carboxy-7-deazaguanine + NH4(+). The protein operates within purine metabolism; 7-cyano-7-deazaguanine biosynthesis. In terms of biological role, catalyzes the complex heterocyclic radical-mediated conversion of 6-carboxy-5,6,7,8-tetrahydropterin (CPH4) to 7-carboxy-7-deazaguanine (CDG), a step common to the biosynthetic pathways of all 7-deazapurine-containing compounds. In Prochlorococcus marinus (strain SARG / CCMP1375 / SS120), this protein is 7-carboxy-7-deazaguanine synthase.